A 331-amino-acid chain; its full sequence is Lipoyl synthase (331 aa).

Cys74, Cys79, Cys85, Cys100, Cys104, Cys107, and Ser314 together coordinate [4Fe-4S] cluster. The Radical SAM core domain occupies 85 to 303 (CFGKGTATFM…ETEAYKMGFT (219 aa)).

Belongs to the radical SAM superfamily. Lipoyl synthase family. The cofactor is [4Fe-4S] cluster.

The protein resides in the cytoplasm. The enzyme catalyses [[Fe-S] cluster scaffold protein carrying a second [4Fe-4S](2+) cluster] + N(6)-octanoyl-L-lysyl-[protein] + 2 oxidized [2Fe-2S]-[ferredoxin] + 2 S-adenosyl-L-methionine + 4 H(+) = [[Fe-S] cluster scaffold protein] + N(6)-[(R)-dihydrolipoyl]-L-lysyl-[protein] + 4 Fe(3+) + 2 hydrogen sulfide + 2 5'-deoxyadenosine + 2 L-methionine + 2 reduced [2Fe-2S]-[ferredoxin]. It functions in the pathway protein modification; protein lipoylation via endogenous pathway; protein N(6)-(lipoyl)lysine from octanoyl-[acyl-carrier-protein]: step 2/2. Catalyzes the radical-mediated insertion of two sulfur atoms into the C-6 and C-8 positions of the octanoyl moiety bound to the lipoyl domains of lipoate-dependent enzymes, thereby converting the octanoylated domains into lipoylated derivatives. This Leptothrix cholodnii (strain ATCC 51168 / LMG 8142 / SP-6) (Leptothrix discophora (strain SP-6)) protein is Lipoyl synthase.